Reading from the N-terminus, the 220-residue chain is Pyridoxine/pyridoxamine 5'-phosphate oxidase (220 aa).

Substrate contacts are provided by residues 13-16 and Lys77; that span reads RVEY. Residues 72 to 77, 87 to 88, Lys94, and Gln116 each bind FMN; these read RTVLCK and FT. Tyr134, Arg138, and Ser142 together coordinate substrate. FMN is bound by residues 151-152 and Trp197; that span reads QS. 203 to 205 provides a ligand contact to substrate; the sequence is RVH. Arg207 lines the FMN pocket.

It belongs to the pyridoxamine 5'-phosphate oxidase family. As to quaternary structure, homodimer. It depends on FMN as a cofactor.

The catalysed reaction is pyridoxamine 5'-phosphate + O2 + H2O = pyridoxal 5'-phosphate + H2O2 + NH4(+). The enzyme catalyses pyridoxine 5'-phosphate + O2 = pyridoxal 5'-phosphate + H2O2. The protein operates within cofactor metabolism; pyridoxal 5'-phosphate salvage; pyridoxal 5'-phosphate from pyridoxamine 5'-phosphate: step 1/1. Its pathway is cofactor metabolism; pyridoxal 5'-phosphate salvage; pyridoxal 5'-phosphate from pyridoxine 5'-phosphate: step 1/1. Catalyzes the oxidation of either pyridoxine 5'-phosphate (PNP) or pyridoxamine 5'-phosphate (PMP) into pyridoxal 5'-phosphate (PLP). This Mycobacterium sp. (strain KMS) protein is Pyridoxine/pyridoxamine 5'-phosphate oxidase.